The primary structure comprises 164 residues: R-phycoerythrin alpha chain (164 aa).

Residues Asn-47, Lys-81, Cys-82, Arg-84, His-88, Arg-137, Cys-139, and Arg-142 each contribute to the (2R,3E)-phycoerythrobilin site.

The protein belongs to the phycobiliprotein family. As to quaternary structure, heterododecamer of 6 alpha and 6 beta chains. The basic functional unit of phycobiliproteins is a ring-shaped hexamer formed from two back-to-back trimers contacting via the alpha chain subunits. The trimers are composed of alpha/beta subunit heterodimers arranged around a three-fold axis of symmetry. The phycoerythrins also contain a gamma subunit which is located in the center of the hexamer. Contains two covalently linked phycoerythrobilin chromophores. In PubMed:8876649 the authors refer to the bilins as phycoerythrobilins. In the PDB entries, the bilins are named as phycocyanobilins although the modeled compounds correspond to phycoerythrobilins.

It is found in the plastid. The protein resides in the chloroplast thylakoid membrane. Light-harvesting photosynthetic tetrapyrrole chromophore-protein from the phycobiliprotein complex. The chain is R-phycoerythrin alpha chain (cpeA) from Polysiphonia urceolata (Red alga).